The chain runs to 255 residues: Receptor expression-enhancing protein 3 (255 aa).

3 consecutive transmembrane segments (helical) span residues 1 to 21 (MVSW…YPAY), 35 to 55 (YVRW…ETVA), and 59 to 79 (VAWF…LLSP). Residues 158 to 242 (TIQGDEPVGQ…KGRKEVRYGS (85 aa)) form a disordered region. At Thr201 the chain carries Phosphothreonine. Ser210 carries the phosphoserine modification. Over residues 222 to 231 (RSQSMKSVKT) the composition is skewed to polar residues.

This sequence belongs to the DP1 family. Expressed in circumvallate papillae.

The protein resides in the endoplasmic reticulum membrane. In terms of biological role, microtubule-binding protein required to ensure proper cell division and nuclear envelope reassembly by sequestering the endoplasmic reticulum away from chromosomes during mitosis. Probably acts by clearing the endoplasmic reticulum membrane from metaphase chromosomes. The chain is Receptor expression-enhancing protein 3 (REEP3) from Homo sapiens (Human).